The chain runs to 242 residues: Small ribosomal subunit protein uS2 (242 aa).

Belongs to the universal ribosomal protein uS2 family.

The protein is Small ribosomal subunit protein uS2 of Shewanella oneidensis (strain ATCC 700550 / JCM 31522 / CIP 106686 / LMG 19005 / NCIMB 14063 / MR-1).